The primary structure comprises 426 residues: 3-phosphoshikimate 1-carboxyvinyltransferase (426 aa).

Lys-22, Ser-23, and Arg-27 together coordinate 3-phosphoshikimate. Lys-22 lines the phosphoenolpyruvate pocket. Phosphoenolpyruvate contacts are provided by Gly-96 and Arg-124. Residues Ser-170, Ser-171, Gln-172, Ser-198, Asp-314, Asn-337, and Lys-341 each coordinate 3-phosphoshikimate. Phosphoenolpyruvate is bound at residue Gln-172. Asp-314 functions as the Proton acceptor in the catalytic mechanism. Phosphoenolpyruvate is bound by residues Arg-345, Arg-387, and Lys-412.

This sequence belongs to the EPSP synthase family. As to quaternary structure, monomer.

Its subcellular location is the cytoplasm. The catalysed reaction is 3-phosphoshikimate + phosphoenolpyruvate = 5-O-(1-carboxyvinyl)-3-phosphoshikimate + phosphate. Its pathway is metabolic intermediate biosynthesis; chorismate biosynthesis; chorismate from D-erythrose 4-phosphate and phosphoenolpyruvate: step 6/7. Functionally, catalyzes the transfer of the enolpyruvyl moiety of phosphoenolpyruvate (PEP) to the 5-hydroxyl of shikimate-3-phosphate (S3P) to produce enolpyruvyl shikimate-3-phosphate and inorganic phosphate. The polypeptide is 3-phosphoshikimate 1-carboxyvinyltransferase (Vibrio atlanticus (strain LGP32) (Vibrio splendidus (strain Mel32))).